The following is a 162-amino-acid chain: NADH-quinone oxidoreductase subunit I 2 (162 aa).

4Fe-4S ferredoxin-type domains lie at Leu52–Gly82 and Glu93–Asn122. Residues Cys62, Cys65, Cys68, Cys72, Cys102, Cys105, Cys108, and Cys112 each contribute to the [4Fe-4S] cluster site.

It belongs to the complex I 23 kDa subunit family. As to quaternary structure, NDH-1 is composed of 14 different subunits. Subunits NuoA, H, J, K, L, M, N constitute the membrane sector of the complex. [4Fe-4S] cluster is required as a cofactor.

It is found in the cell inner membrane. It carries out the reaction a quinone + NADH + 5 H(+)(in) = a quinol + NAD(+) + 4 H(+)(out). Functionally, NDH-1 shuttles electrons from NADH, via FMN and iron-sulfur (Fe-S) centers, to quinones in the respiratory chain. The immediate electron acceptor for the enzyme in this species is believed to be ubiquinone. Couples the redox reaction to proton translocation (for every two electrons transferred, four hydrogen ions are translocated across the cytoplasmic membrane), and thus conserves the redox energy in a proton gradient. In Rhodopseudomonas palustris (strain BisA53), this protein is NADH-quinone oxidoreductase subunit I 2.